A 710-amino-acid chain; its full sequence is DNA ligase (710 aa).

Residues M1–T36 form a disordered region. Residues D63–D67, S111–I112, and E147 contribute to the NAD(+) site. K149 (N6-AMP-lysine intermediate) is an active-site residue. 3 residues coordinate NAD(+): R170, E206, and K353. The Zn(2+) site is built by C444, C447, C460, and C466. The region spanning E623 to E710 is the BRCT domain. The interval A657–V689 is disordered.

It belongs to the NAD-dependent DNA ligase family. LigA subfamily. Mg(2+) serves as cofactor. Mn(2+) is required as a cofactor.

It carries out the reaction NAD(+) + (deoxyribonucleotide)n-3'-hydroxyl + 5'-phospho-(deoxyribonucleotide)m = (deoxyribonucleotide)n+m + AMP + beta-nicotinamide D-nucleotide.. Functionally, DNA ligase that catalyzes the formation of phosphodiester linkages between 5'-phosphoryl and 3'-hydroxyl groups in double-stranded DNA using NAD as a coenzyme and as the energy source for the reaction. It is essential for DNA replication and repair of damaged DNA. This Halorubrum lacusprofundi (strain ATCC 49239 / DSM 5036 / JCM 8891 / ACAM 34) protein is DNA ligase.